The chain runs to 165 residues: Regulator of sigma D (165 aa).

It belongs to the Rsd/AlgQ family. In terms of assembly, interacts with RpoD.

The protein resides in the cytoplasm. Its function is as follows. Binds RpoD and negatively regulates RpoD-mediated transcription activation by preventing the interaction between the primary sigma factor RpoD with the catalytic core of the RNA polymerase and with promoter DNA. May be involved in replacement of the RNA polymerase sigma subunit from RpoD to RpoS during the transition from exponential growth to the stationary phase. This is Regulator of sigma D from Enterobacter sp. (strain 638).